Consider the following 795-residue polypeptide: MKFSELWLREWVNPAIDSDALANQITMAGLEVDGVEPVAGSFNGVVVGEVVECAQHPNADKLRVTKVNVGGERLLDIVCGAPNCRQGLKVAVATIGAILPGDFKIKAAKLRGEPSEGVLCSFSELGISDDHSGIIELPADAPLGTDIREYLKLDDNTIEISVTPNRADCLGIIGVARDVAVLNKAPLQELEMAPVTATISDTLPITVEAADACPRYLGRVVKGINVNAPTPLWMKEKLRRCGIRSIDAVVDVTNYVLLELGQPMHAFDKDRIDGGIVVRMAKEGETVVLLDGSEATLNADTLVIADHHKALGIAGIFGGEHSGVNGETQNVLLECAYFNPLSITGRARRHGLHTDASHRYERGVDPALQYKAIERATRLLLDICGGDAGPIIDVSNEATLPKRATITLRRSKLDRLIGHHIADEQVSDILRRLGCEVTEGQDEWKAVAPTWRFDMEIEEDLVEEVARVYGYNNIPDEPIQAGLIMGTHREADLSLKRVKTMLNDKGYQEVITYSFVDPKVQQLIHPGAEALLLPNPISVEMSAMRLSLWSGLLATVVYNQNRQQNRVRIFETGLRFVPDTQANLGIRQDLMLAGVICGNRYDEHWNLAKETVDFYDLKGDLEAVLDLTGKLGDIQFKAEMNPALHPGQSAAIYLKDERIGFIGVVHPELERKLDLNGRTLVFELEWNKLADRIVPQAREISRFPANRRDIAVVVAENVPAADILSECKKVGVNQVVGVNLFDVYRGKGVAEGYKSLAISLILQDTNRTLEEEEIAATVAKCVEALKERFQASLRD.

A tRNA-binding domain is found at 39–148 (AGSFNGVVVG…ADAPLGTDIR (110 aa)). The region spanning 401-476 (PKRATITLRR…RVYGYNNIPD (76 aa)) is the B5 domain. The Mg(2+) site is built by D454, D460, E463, and E464. Residues 701–794 (SRFPANRRDI…LKERFQASLR (94 aa)) enclose the FDX-ACB domain.

It belongs to the phenylalanyl-tRNA synthetase beta subunit family. Type 1 subfamily. In terms of assembly, tetramer of two alpha and two beta subunits. It depends on Mg(2+) as a cofactor.

It is found in the cytoplasm. It catalyses the reaction tRNA(Phe) + L-phenylalanine + ATP = L-phenylalanyl-tRNA(Phe) + AMP + diphosphate + H(+). The protein is Phenylalanine--tRNA ligase beta subunit of Salmonella choleraesuis (strain SC-B67).